A 598-amino-acid polypeptide reads, in one-letter code: Arginine--tRNA ligase (598 aa).

The 'HIGH' region motif lies at 139–149 (ANPTGPMHVGH).

Belongs to the class-I aminoacyl-tRNA synthetase family. In terms of assembly, monomer.

Its subcellular location is the cytoplasm. The enzyme catalyses tRNA(Arg) + L-arginine + ATP = L-arginyl-tRNA(Arg) + AMP + diphosphate. In Bradyrhizobium sp. (strain BTAi1 / ATCC BAA-1182), this protein is Arginine--tRNA ligase.